A 740-amino-acid polypeptide reads, in one-letter code: Ion-translocating oxidoreductase complex subunit C (740 aa).

4Fe-4S ferredoxin-type domains lie at 369–397 and 407–436; these read GEPQ…QQLY and KATT…VQYF. The [4Fe-4S] cluster site is built by Cys-377, Cys-380, Cys-383, Cys-387, Cys-416, Cys-419, Cys-422, and Cys-426. Disordered stretches follow at residues 602–652, 664–685, and 695–714; these read KLEQ…DPRK, ARKL…PRKA, and KARK…QVDP. Over residues 605 to 615 the composition is skewed to low complexity; sequence QQQANAEPEQQ.

The protein belongs to the 4Fe4S bacterial-type ferredoxin family. RnfC subfamily. The complex is composed of six subunits: RsxA, RsxB, RsxC, RsxD, RsxE and RsxG. [4Fe-4S] cluster serves as cofactor.

Its subcellular location is the cell inner membrane. In terms of biological role, part of a membrane-bound complex that couples electron transfer with translocation of ions across the membrane. Required to maintain the reduced state of SoxR. The protein is Ion-translocating oxidoreductase complex subunit C of Escherichia coli O157:H7.